Reading from the N-terminus, the 288-residue chain is Bifunctional protein FolD (288 aa).

Residues 171 to 173 (GRS), serine 196, and threonine 237 contribute to the NADP(+) site.

The protein belongs to the tetrahydrofolate dehydrogenase/cyclohydrolase family. As to quaternary structure, homodimer.

The enzyme catalyses (6R)-5,10-methylene-5,6,7,8-tetrahydrofolate + NADP(+) = (6R)-5,10-methenyltetrahydrofolate + NADPH. It carries out the reaction (6R)-5,10-methenyltetrahydrofolate + H2O = (6R)-10-formyltetrahydrofolate + H(+). Its pathway is one-carbon metabolism; tetrahydrofolate interconversion. Catalyzes the oxidation of 5,10-methylenetetrahydrofolate to 5,10-methenyltetrahydrofolate and then the hydrolysis of 5,10-methenyltetrahydrofolate to 10-formyltetrahydrofolate. In Elusimicrobium minutum (strain Pei191), this protein is Bifunctional protein FolD.